Consider the following 599-residue polypeptide: MWSTISISMNVAILKKPLNFLHNSNNKASNPRCVSSTRRRPSCPLQLDVEPRRSGNYQPSAWDFNYIQSLNNNHSKEERHLERKAKLIEEVKMLLEQEMAAVQQLELIEDLKNLGLSYLFQDEIKIILNSIYNHHKCFHNNHEQCIHVNSDLYFVALGFRLFRQHGFKVSQEVFDCFKNEEGSDFSANLADDTKGLLQLYEASYLVTEDEDTLEMARQFSTKILQKKVEEKMIEKENLLSWTLHSLELPLHWRIQRLEAKWFLDAYASRPDMNPIIFELAKLEFNIAQALQQEELKDLSRWWNDTGIAEKLPFARDRIVESHYWAIGTLEPYQYRYQRSLIAKIIALTTVVDDVYDVYGTLDELQLFTDAIRRWDIESINQLPSYMQLCYLAIYNFVSELAYDIFRDKGFNSLPYLHKSWLDLVEAYFVEAKWFHDGYTPTLEEYLNNSKITIICPAIVSEIYFAFANSIDKTEVESIYKYHDILYLSGMLARLPDDLGTSSFEMKRGDVAKAIQCYMKEHNASEEEAREHIRFLMREAWKHMNTAAAADDCPFESDLVVGAASLGRVANFVYVEGDGFGVQHSKIHQQMAELLFYPYQ.

A chloroplast-targeting transit peptide spans 1–34 (MWSTISISMNVAILKKPLNFLHNSNNKASNPRCV). 5 residues coordinate Mg(2+): Asp352, Asp356, Asp496, Thr500, and Glu504. Positions 352–356 (DDVYD) match the DDXXD motif motif.

It belongs to the terpene synthase family. The cofactor is Mg(2+). Mn(2+) serves as cofactor.

It localises to the plastid. Its subcellular location is the chloroplast. It catalyses the reaction (2E)-geranyl diphosphate = beta-myrcene + diphosphate. The protein operates within secondary metabolite biosynthesis; terpenoid biosynthesis. Monoterpene synthase that catalyzes the formation of beta-myrcene from geranyl diphosphate. The polypeptide is Beta-myrcene synthase, chloroplastic (MYS) (Ocimum basilicum (Sweet basil)).